The sequence spans 332 residues: Adenosine deaminase (332 aa).

Zn(2+) is bound by residues His-12 and His-14. Residues His-14, Asp-16, and Gly-170 each coordinate substrate. His-197 is a Zn(2+) binding site. The active-site Proton donor is Glu-200. Residue Asp-278 coordinates Zn(2+).

Belongs to the metallo-dependent hydrolases superfamily. Adenosine and AMP deaminases family. Adenosine deaminase subfamily. Zn(2+) is required as a cofactor.

It carries out the reaction adenosine + H2O + H(+) = inosine + NH4(+). The enzyme catalyses 2'-deoxyadenosine + H2O + H(+) = 2'-deoxyinosine + NH4(+). Catalyzes the hydrolytic deamination of adenosine and 2-deoxyadenosine. The polypeptide is Adenosine deaminase (Clostridium perfringens (strain SM101 / Type A)).